The following is a 341-amino-acid chain: L-threonine 3-dehydrogenase (341 aa).

C38 provides a ligand contact to Zn(2+). Catalysis depends on charge relay system residues T40 and H43. Residues H63, E64, C93, C96, C99, and C107 each coordinate Zn(2+). NAD(+) contacts are provided by residues I175, D195, R200, 262–264 (LGI), and 286–287 (IY).

It belongs to the zinc-containing alcohol dehydrogenase family. As to quaternary structure, homotetramer. It depends on Zn(2+) as a cofactor.

Its subcellular location is the cytoplasm. The catalysed reaction is L-threonine + NAD(+) = (2S)-2-amino-3-oxobutanoate + NADH + H(+). It participates in amino-acid degradation; L-threonine degradation via oxydo-reductase pathway; glycine from L-threonine: step 1/2. Catalyzes the NAD(+)-dependent oxidation of L-threonine to 2-amino-3-ketobutyrate. In Proteus mirabilis (strain HI4320), this protein is L-threonine 3-dehydrogenase.